Here is a 61-residue protein sequence, read N- to C-terminus: Large ribosomal subunit protein bL32 (61 aa).

Positions 1–18 (MAIVPKRKTSKQRKRKRQ) are enriched in basic residues. The tract at residues 1 to 20 (MAIVPKRKTSKQRKRKRQTH) is disordered.

It belongs to the bacterial ribosomal protein bL32 family.

The polypeptide is Large ribosomal subunit protein bL32 (rpmF) (Mycoplasmopsis pulmonis (strain UAB CTIP) (Mycoplasma pulmonis)).